We begin with the raw amino-acid sequence, 349 residues long: Cobalt-precorrin-5B C(1)-methyltransferase (349 aa).

Belongs to the CbiD family.

The catalysed reaction is Co-precorrin-5B + S-adenosyl-L-methionine = Co-precorrin-6A + S-adenosyl-L-homocysteine. Its pathway is cofactor biosynthesis; adenosylcobalamin biosynthesis; cob(II)yrinate a,c-diamide from sirohydrochlorin (anaerobic route): step 6/10. Catalyzes the methylation of C-1 in cobalt-precorrin-5B to form cobalt-precorrin-6A. In Saccharolobus islandicus (strain M.16.27) (Sulfolobus islandicus), this protein is Cobalt-precorrin-5B C(1)-methyltransferase.